Here is a 190-residue protein sequence, read N- to C-terminus: MTQSSTPAVETDSKTGSSKAISFQDYLDLSKQAFHNQQPLHLLTQRISFQDWARLRAILAPALYVDYTKIGKEKWDAMSADDFMAMVSNDDFLGDPCVKTQHLIGATYWERVSESKVIGHHQLRAAHQVYTSPDLKTVKLRGHSHATNEHYYVKSGGVWKFAGLKPEVRWNEYKFEEVFKGSYTQSEKHS.

Tyrosine 67 contacts substrate. Catalysis depends on residues histidine 102 and histidine 127. Substrate is bound at residue asparagine 148.

Belongs to the scytalone dehydratase family. Homotrimer. Each subunit contains an active site, located in the central part of the hydrophobic core of the monomer, which functions independently.

Functionally, scytalone dehydratase-like protein; part of the Pks2 gene cluster that mediates the formation of infectious structures (appressoria), enabling these fungi to kill insects faster. The product of the Pks2 gene cluster is different from the one of Pks1 and has still not been identified. This is Scytalone dehydratase-like protein Arp1 from Metarhizium anisopliae (strain ARSEF 549).